The following is a 1848-amino-acid chain: Cellulose-binding protein A (1848 aa).

The first 28 residues, 1 to 28 (MQKKKSLNLLLALMMVFALVLPSIPALA), serve as a signal peptide directing secretion. In terms of domain architecture, CBM3 spans 29–190 (ATSSMSVEFY…GAKVLGTAPG (162 aa)). Cohesin domains are found at residues 291-428 (VTAT…TVTI), 435-570 (MQIS…SVTI), 668-801 (VTAT…SVTI), 810-943 (VTAT…SVTI), 952-1085 (VTAT…SVTI), 1094-1227 (VTAT…SVTI), 1236-1369 (VTAT…SVTI), 1377-1511 (VKAT…RLTI), and 1709-1847 (FAVK…SVKV).

In terms of processing, the N-terminus is blocked. Post-translationally, glycosylated.

The protein localises to the secreted. Its function is as follows. Binds to cellulose fibers and coordinates cellulase enzymes. This chain is Cellulose-binding protein A (cbpA), found in Clostridium cellulovorans.